The primary structure comprises 441 residues: Ribosomal protein uS12 methylthiotransferase RimO (441 aa).

One can recognise an MTTase N-terminal domain in the interval 7-117 (PKISFVSLGC…VLEAVHRALP (111 aa)). The [4Fe-4S] cluster site is built by C16, C52, C81, C148, C152, and C155. The region spanning 134–371 (LTPRHYAYLK…MARQQKISAR (238 aa)) is the Radical SAM core domain. The TRAM domain occupies 374 to 440 (KRKVGTRQQV…AYDLHGTVAG (67 aa)).

It belongs to the methylthiotransferase family. RimO subfamily. [4Fe-4S] cluster is required as a cofactor.

The protein localises to the cytoplasm. The catalysed reaction is L-aspartate(89)-[ribosomal protein uS12]-hydrogen + (sulfur carrier)-SH + AH2 + 2 S-adenosyl-L-methionine = 3-methylsulfanyl-L-aspartate(89)-[ribosomal protein uS12]-hydrogen + (sulfur carrier)-H + 5'-deoxyadenosine + L-methionine + A + S-adenosyl-L-homocysteine + 2 H(+). In terms of biological role, catalyzes the methylthiolation of an aspartic acid residue of ribosomal protein uS12. The polypeptide is Ribosomal protein uS12 methylthiotransferase RimO (Rhodopseudomonas palustris (strain BisA53)).